Here is a 257-residue protein sequence, read N- to C-terminus: Anamorsin homolog (257 aa).

An N-terminal SAM-like domain region spans residues Met1–Leu134. The segment at Asn135–Ile168 is linker. Residues Cys178, Cys187, Cys190, and Cys192 each contribute to the [2Fe-2S] cluster site. The segment at Cys178–Cys192 is fe-S binding site A. Positions 218, 221, 229, and 232 each coordinate [4Fe-4S] cluster. 2 short sequence motifs (cx2C motif) span residues Cys218 to Cys221 and Cys229 to Cys232. Residues Cys218 to Cys232 are fe-S binding site B.

Belongs to the anamorsin family. As to quaternary structure, monomer. Requires [2Fe-2S] cluster as cofactor. The cofactor is [4Fe-4S] cluster.

It localises to the cytoplasm. Its subcellular location is the mitochondrion intermembrane space. Its function is as follows. Component of the cytosolic iron-sulfur (Fe-S) protein assembly (CIA) machinery. Required for the maturation of extramitochondrial Fe-S proteins. Part of an electron transfer chain functioning in an early step of cytosolic Fe-S biogenesis, facilitating the de novo assembly of a [4Fe-4S] cluster on the cytosolic Fe-S scaffold complex. Electrons are transferred from NADPH via a FAD- and FMN-containing diflavin oxidoreductase. Together with the diflavin oxidoreductase, also required for the assembly of the diferric tyrosyl radical cofactor of ribonucleotide reductase (RNR), probably by providing electrons for reduction during radical cofactor maturation in the catalytic small subunit. This Acyrthosiphon pisum (Pea aphid) protein is Anamorsin homolog.